The chain runs to 402 residues: Enoyl-[acyl-carrier-protein] reductase [NADH] (402 aa).

NAD(+)-binding positions include 48-53 (GASSGY), 74-75 (FE), 111-112 (DA), and 140-141 (LA). Tyr226 is a binding site for substrate. The active-site Proton donor is the Tyr236. NAD(+) contacts are provided by residues Lys245 and 274 to 276 (VVT).

This sequence belongs to the TER reductase family. As to quaternary structure, monomer.

It carries out the reaction a 2,3-saturated acyl-[ACP] + NAD(+) = a (2E)-enoyl-[ACP] + NADH + H(+). It functions in the pathway lipid metabolism; fatty acid biosynthesis. Functionally, involved in the final reduction of the elongation cycle of fatty acid synthesis (FAS II). Catalyzes the reduction of a carbon-carbon double bond in an enoyl moiety that is covalently linked to an acyl carrier protein (ACP). This Xanthomonas campestris pv. campestris (strain 8004) protein is Enoyl-[acyl-carrier-protein] reductase [NADH].